A 251-amino-acid chain; its full sequence is Probable transcriptional regulatory protein Swol_1435 (251 aa).

Residues 1 to 23 form a disordered region; that stretch reads MAGHSKWANIKHKKARSDEKRGK.

Belongs to the TACO1 family.

The protein resides in the cytoplasm. The chain is Probable transcriptional regulatory protein Swol_1435 from Syntrophomonas wolfei subsp. wolfei (strain DSM 2245B / Goettingen).